A 2513-amino-acid chain; its full sequence is Highly reducing polyketide synthase ACRTS2 (2513 aa).

In terms of domain architecture, Ketosynthase family 3 (KS3) spans 4 to 429 (DTPVAIIGVS…GSSSAVIIDR (426 aa)). Active-site for beta-ketoacyl synthase activity residues include Cys174, His313, and His353. A malonyl-CoA:ACP transacylase (MAT) domain region spans residues 547–875 (VFTGQGAQYA…NYLPSLLRGT (329 aa)). The For malonyltransferase activity role is filled by Ser635. The interval 942-1074 (HALIGRKAPS…GKIEPEIADL (133 aa)) is N-terminal hotdog fold. The tract at residues 942–1253 (HALIGRKAPS…TFRTVSSADD (312 aa)) is dehydratase (DH) domain. One can recognise a PKS/mFAS DH domain in the interval 942-1254 (HALIGRKAPS…FRTVSSADDQ (313 aa)). The active-site Proton acceptor; for dehydratase activity is the His974. A C-terminal hotdog fold region spans residues 1092 to 1254 (AGVIEHDMDN…FRTVSSADDQ (163 aa)). Asp1161 acts as the Proton donor; for dehydratase activity in catalysis. The interval 1407–1600 (SKIIGYLTEN…IPTNYRTDNP (194 aa)) is methyltransferase (CMet) domain. Residues 1816–2127 (GSPDTIYFRR…SRDHIGRLVV (312 aa)) form an enoylreductase (ER) domain region. Residues 2152 to 2327 (ATYLVAGGTR…YTVSIGLPVV (176 aa)) form a ketoreductase (KR) domain region. The Carrier domain maps to 2433 to 2510 (DPLTGLIEAL…ALAVNILAQR (78 aa)). Residue Ser2470 is modified to O-(pantetheine 4'-phosphoryl)serine.

Its pathway is mycotoxin biosynthesis. Highly reducing polyketide synthase; part of the gene cluster that mediates the biosynthesis of the host-selective toxins (HSTs) ACR-toxins responsible for brown spot of rough lemon disease by the rough lemon pathotype. ACR-toxins cause uncoupling of mitochondrial oxidative-phosphorylation similar to that of classic protonophore. The structure of the major form of ACR-toxin (ACR-toxin I) consists of an alpha-dihydropyrone ring in a 19-carbon polyalcohol, a typical polyketide structure. Minor toxins were characterized as having a pyrone ring with polyalcohol side chains different in length and showing weaker toxicity. The highly reducing polyketide synthase ACRTS2 has all necessary enzymatic domains for multiple cycles of condensation and beta-keto processing. The cytochrome P450 monooxygenase ACRTS1 has also been shown to be essential for ACR-toxin biosynthesis, however its exact role in the pathway has not been elucidated yet. The protein is Highly reducing polyketide synthase ACRTS2 of Alternaria alternata (Alternaria rot fungus).